The primary structure comprises 79 residues: Large ribosomal subunit protein bL28 (79 aa).

The protein belongs to the bacterial ribosomal protein bL28 family.

The chain is Large ribosomal subunit protein bL28 from Porphyromonas gingivalis (strain ATCC 33277 / DSM 20709 / CIP 103683 / JCM 12257 / NCTC 11834 / 2561).